We begin with the raw amino-acid sequence, 191 residues long: Potassium-transporting ATPase KdpC subunit (191 aa).

Residues 13–35 traverse the membrane as a helical segment; it reads VLFTGLCGLAYPLAITGVAQAVL. Residues 112 to 132 form a disordered region; that stretch reads SGPVPADAVTSSASGLDPDIS.

The protein belongs to the KdpC family. As to quaternary structure, the system is composed of three essential subunits: KdpA, KdpB and KdpC.

Its subcellular location is the cell inner membrane. In terms of biological role, part of the high-affinity ATP-driven potassium transport (or Kdp) system, which catalyzes the hydrolysis of ATP coupled with the electrogenic transport of potassium into the cytoplasm. This subunit acts as a catalytic chaperone that increases the ATP-binding affinity of the ATP-hydrolyzing subunit KdpB by the formation of a transient KdpB/KdpC/ATP ternary complex. This Allorhizobium ampelinum (strain ATCC BAA-846 / DSM 112012 / S4) (Agrobacterium vitis (strain S4)) protein is Potassium-transporting ATPase KdpC subunit.